Reading from the N-terminus, the 289-residue chain is Diaminopimelate epimerase (289 aa).

The substrate site is built by asparagine 13, glutamine 52, and asparagine 72. Cysteine 81 (proton donor) is an active-site residue. Substrate contacts are provided by residues 82–83, asparagine 167, asparagine 201, and 219–220; these read GN and ER. The active-site Proton acceptor is cysteine 228. 229–230 contacts substrate; that stretch reads GT.

This sequence belongs to the diaminopimelate epimerase family. Homodimer.

Its subcellular location is the cytoplasm. The enzyme catalyses (2S,6S)-2,6-diaminopimelate = meso-2,6-diaminopimelate. The protein operates within amino-acid biosynthesis; L-lysine biosynthesis via DAP pathway; DL-2,6-diaminopimelate from LL-2,6-diaminopimelate: step 1/1. Functionally, catalyzes the stereoinversion of LL-2,6-diaminopimelate (L,L-DAP) to meso-diaminopimelate (meso-DAP), a precursor of L-lysine and an essential component of the bacterial peptidoglycan. In Caulobacter sp. (strain K31), this protein is Diaminopimelate epimerase.